A 416-amino-acid polypeptide reads, in one-letter code: Probable mannose-6-phosphate isomerase (416 aa).

4 residues coordinate Zn(2+): Q99, H101, E126, and H259. Residue R278 is part of the active site.

The protein belongs to the mannose-6-phosphate isomerase type 1 family. Zn(2+) serves as cofactor.

The protein resides in the cytoplasm. The enzyme catalyses D-mannose 6-phosphate = D-fructose 6-phosphate. It functions in the pathway nucleotide-sugar biosynthesis; GDP-alpha-D-mannose biosynthesis; alpha-D-mannose 1-phosphate from D-fructose 6-phosphate: step 1/2. Its function is as follows. Involved in the synthesis of the GDP-mannose and dolichol-phosphate-mannose required for a number of critical mannosyl transfer reactions. This Caenorhabditis elegans protein is Probable mannose-6-phosphate isomerase.